The primary structure comprises 209 residues: COP9 signalosome complex subunit 8 (209 aa).

The region spanning 8–179 (ESAFSFKKLL…GALDVSFNKF (172 aa)) is the PCI domain. Phosphoserine is present on S175.

This sequence belongs to the CSN8 family. Component of the CSN complex, composed of COPS1/GPS1, COPS2, COPS3, COPS4, COPS5, COPS6, COPS7 (COPS7A or COPS7B), COPS8 and COPS9 isoform 1. In the complex, it probably interacts directly with COPS3, COPS4 and COPS7 (COPS7A or COPS7B).

It localises to the cytoplasm. Its subcellular location is the nucleus. Its function is as follows. Component of the COP9 signalosome complex (CSN), a complex involved in various cellular and developmental processes. The CSN complex is an essential regulator of the ubiquitin (Ubl) conjugation pathway by mediating the deneddylation of the cullin subunits of SCF-type E3 ligase complexes, leading to decrease the Ubl ligase activity of SCF-type complexes such as SCF, CSA or DDB2. The complex is also involved in phosphorylation of p53/TP53, c-jun/JUN, IkappaBalpha/NFKBIA, ITPK1 and IRF8/ICSBP, possibly via its association with CK2 and PKD kinases. CSN-dependent phosphorylation of TP53 and JUN promotes and protects degradation by the Ubl system, respectively. The protein is COP9 signalosome complex subunit 8 (COPS8) of Homo sapiens (Human).